Here is a 1053-residue protein sequence, read N- to C-terminus: Ubiquitin-like modifier-activating enzyme 6 (1053 aa).

Residue Met-1 is modified to N-acetylmethionine. Arg-46 serves as a coordination point for ATP. Thr-54 is subject to Phosphothreonine. Residues Ala-470 and Asp-497 each coordinate ATP. Mg(2+)-binding residues include Asp-499 and Glu-502. Positions 505, 508, 509, and 521 each coordinate ATP. Lys-544 carries the N6-acetyllysine modification. Position 545 (Val-545) interacts with ATP. Residue Asp-569 coordinates Mg(2+). Asn-570 serves as a coordination point for ATP. Residue Cys-625 is the Glycyl thioester intermediate of the active site. Residue Lys-729 is modified to N6-acetyllysine. Ser-737 is subject to Phosphoserine.

It belongs to the ubiquitin-activating E1 family. Forms a thioester with UBD in cells stimulated with tumor necrosis factor-alpha (TNFa) and interferon-gamma (IFNg).

It carries out the reaction ATP + ubiquitin + [E1 ubiquitin-activating enzyme]-L-cysteine = AMP + diphosphate + S-ubiquitinyl-[E1 ubiquitin-activating enzyme]-L-cysteine.. It functions in the pathway protein modification; protein ubiquitination. Its function is as follows. Activates ubiquitin by first adenylating its C-terminal glycine residue with ATP, and thereafter linking this residue to the side chain of a cysteine residue in E1, yielding a ubiquitin-E1 thioester and free AMP. Specific for ubiquitin, does not activate ubiquitin-like peptides. Also activates UBD/FAT10 conjugation via adenylation of its C-terminal glycine. Differs from UBE1 in its specificity for substrate E2 charging. Does not charge cell cycle E2s, such as CDC34. Essential for embryonic development. This chain is Ubiquitin-like modifier-activating enzyme 6 (Uba6), found in Mus musculus (Mouse).